We begin with the raw amino-acid sequence, 890 residues long: Alanine--tRNA ligase (890 aa).

Zn(2+) is bound by residues His568, His572, Cys680, and His684.

Belongs to the class-II aminoacyl-tRNA synthetase family. Zn(2+) is required as a cofactor.

The protein resides in the cytoplasm. It carries out the reaction tRNA(Ala) + L-alanine + ATP = L-alanyl-tRNA(Ala) + AMP + diphosphate. Functionally, catalyzes the attachment of alanine to tRNA(Ala) in a two-step reaction: alanine is first activated by ATP to form Ala-AMP and then transferred to the acceptor end of tRNA(Ala). Also edits incorrectly charged Ser-tRNA(Ala) and Gly-tRNA(Ala) via its editing domain. This Psychrobacter cryohalolentis (strain ATCC BAA-1226 / DSM 17306 / VKM B-2378 / K5) protein is Alanine--tRNA ligase.